A 104-amino-acid chain; its full sequence is Membrane magnesium transporter (104 aa).

Residues 1–2 lie on the Cytoplasmic side of the membrane; that stretch reads MN. Residues 3-23 traverse the membrane as a helical segment; it reads LGFLVGVFGVLILSHAAYSTI. The Lumenal portion of the chain corresponds to 24–40; the sequence is QYRGLLKIMEEEFSRPP. The helical transmembrane segment at 41–61 threads the bilayer; the sequence is INVILELIIGLALCMWAALTF. The Cytoplasmic segment spans residues 62–104; sequence PGKFLSIHPDSDENRAVFLPDNSDFMIFNHRGRLFPPQIDMKF.

The protein belongs to the membrane magnesium transporter (TC 1.A.67) family. As to quaternary structure, component of the ER membrane protein complex (EMC).

It localises to the endoplasmic reticulum membrane. The protein resides in the golgi apparatus membrane. Its subcellular location is the early endosome membrane. In terms of biological role, mediates Mg(2+) transport. The protein is Membrane magnesium transporter of Arabidopsis thaliana (Mouse-ear cress).